The chain runs to 268 residues: Peptide transport system ATP-binding protein SapF (268 aa).

The ABC transporter domain maps to 6–251 (LEVRNLSKTF…PLHELTRRLI (246 aa)). 47 to 54 (GENGSGKS) is a binding site for ATP.

It belongs to the ABC transporter superfamily.

The protein localises to the cell inner membrane. Involved in a peptide intake transport system that plays a role in the resistance to antimicrobial peptides. The polypeptide is Peptide transport system ATP-binding protein SapF (Salmonella typhimurium (strain LT2 / SGSC1412 / ATCC 700720)).